An 89-amino-acid polypeptide reads, in one-letter code: Small ribosomal subunit protein uS14A (89 aa).

It belongs to the universal ribosomal protein uS14 family. In terms of assembly, part of the 30S ribosomal subunit. Contacts proteins S3 and S10.

In terms of biological role, binds 16S rRNA, required for the assembly of 30S particles and may also be responsible for determining the conformation of the 16S rRNA at the A site. This chain is Small ribosomal subunit protein uS14A, found in Staphylococcus haemolyticus (strain JCSC1435).